A 490-amino-acid polypeptide reads, in one-letter code: Betaine aldehyde dehydrogenase (490 aa).

K(+)-binding residues include S26, I27, and D93. 150-152 serves as a coordination point for NAD(+); the sequence is GAW. K162 functions as the Charge relay system in the catalytic mechanism. Residues 176-179 and 230-233 contribute to the NAD(+) site; these read KPSE and GVET. L246 is a K(+) binding site. E252 functions as the Proton acceptor in the catalytic mechanism. The NAD(+) site is built by G254, C286, and E387. C286 functions as the Nucleophile in the catalytic mechanism. The residue at position 286 (C286) is a Cysteine sulfenic acid (-SOH). K457 and G460 together coordinate K(+). The active-site Charge relay system is E464.

This sequence belongs to the aldehyde dehydrogenase family. In terms of assembly, dimer of dimers. It depends on K(+) as a cofactor.

The catalysed reaction is betaine aldehyde + NAD(+) + H2O = glycine betaine + NADH + 2 H(+). It functions in the pathway amine and polyamine biosynthesis; betaine biosynthesis via choline pathway; betaine from betaine aldehyde: step 1/1. Involved in the biosynthesis of the osmoprotectant glycine betaine. Catalyzes the irreversible oxidation of betaine aldehyde to the corresponding acid. This chain is Betaine aldehyde dehydrogenase, found in Acinetobacter baumannii (strain AB307-0294).